The chain runs to 367 residues: Glycolate oxidase 1 (367 aa).

Met-1 is subject to N-acetylmethionine. Tyr-24 is a binding site for glyoxylate. Residues 77-79, Ser-106, 127-129, and Thr-155 each bind FMN; these read PTA and QLY. Position 129 (Tyr-129) interacts with glyoxylate. A glyoxylate-binding site is contributed by Arg-164. FMN is bound by residues Lys-230 and Ser-252. Residues His-254 and Arg-257 each coordinate glyoxylate. His-254 functions as the Proton acceptor in the catalytic mechanism. Residues 285–289 and 308–309 contribute to the FMN site; these read DGGVR and GR.

The protein belongs to the FMN-dependent alpha-hydroxy acid dehydrogenase family. As to quaternary structure, homotetramer. It depends on FMN as a cofactor.

The protein resides in the peroxisome. The catalysed reaction is glycolate + O2 = glyoxylate + H2O2. The protein operates within photosynthesis; photorespiration; glycine from 2-phosphoglycolate: step 2/3. Its function is as follows. Catalyzes the oxidation of glycolate to glyoxylate, with a reduction of O2 to H2O2. Is a key enzyme in photorespiration in green plants. This Arabidopsis thaliana (Mouse-ear cress) protein is Glycolate oxidase 1 (GLO1).